Reading from the N-terminus, the 119-residue chain is MCSCGKNRAGEGAPKRYSRNFTDPWRKTPGRVIGTSFVRFYQVTLSSLIGNSCRHLPTCSEYAYEAIARHGLWSGGWMGLFRVVRCGPFGTHGFDPVPRALSSDLKWYLPWRYWRCSAS.

Belongs to the UPF0161 family.

The protein localises to the cell inner membrane. In terms of biological role, could be involved in insertion of integral membrane proteins into the membrane. This Brucella anthropi (strain ATCC 49188 / DSM 6882 / CCUG 24695 / JCM 21032 / LMG 3331 / NBRC 15819 / NCTC 12168 / Alc 37) (Ochrobactrum anthropi) protein is Putative membrane protein insertion efficiency factor.